We begin with the raw amino-acid sequence, 52 residues long: Ovomucoid (52 aa).

Residues 2–52 (VDCSDYPKPVCTLEEMPLCGSDNKTYGNKCNFCNAVVDSNGTLTLSHFGKC) form the Kazal-like domain. Disulfide bonds link C4/C34, C12/C31, and C20/C52. N-linked (GlcNAc...) asparagine glycosylation is present at N41.

It is found in the secreted. The chain is Ovomucoid from Scythrops novaehollandiae (Channel-billed cuckoo).